The chain runs to 213 residues: Orotate phosphoribosyltransferase (213 aa).

Lys26 contacts 5-phospho-alpha-D-ribose 1-diphosphate. 34–35 (FF) contributes to the orotate binding site. Residues 72 to 73 (YK), Arg99, Lys100, Lys103, His105, and 124 to 132 (DDVITAGTA) each bind 5-phospho-alpha-D-ribose 1-diphosphate. Residues Thr128 and Arg156 each coordinate orotate.

This sequence belongs to the purine/pyrimidine phosphoribosyltransferase family. PyrE subfamily. In terms of assembly, homodimer. It depends on Mg(2+) as a cofactor.

It catalyses the reaction orotidine 5'-phosphate + diphosphate = orotate + 5-phospho-alpha-D-ribose 1-diphosphate. It functions in the pathway pyrimidine metabolism; UMP biosynthesis via de novo pathway; UMP from orotate: step 1/2. Catalyzes the transfer of a ribosyl phosphate group from 5-phosphoribose 1-diphosphate to orotate, leading to the formation of orotidine monophosphate (OMP). In Escherichia coli O45:K1 (strain S88 / ExPEC), this protein is Orotate phosphoribosyltransferase.